The sequence spans 121 residues: uncharacterized protein (121 aa).

A run of 2 helical transmembrane segments spans residues 16–36 (GFMV…GFAV) and 74–94 (LYIA…MKTI).

It is found in the cell membrane. This is an uncharacterized protein from Bacillus subtilis (strain 168).